The sequence spans 589 residues: Probable peptidoglycan D,D-transpeptidase FtsI (589 aa).

A helical transmembrane segment spans residues 47–67 (IFLVMGFFGFCFVGVSLGAGW). The active-site Acyl-ester intermediate is the Ser-296.

This sequence belongs to the transpeptidase family. In terms of assembly, interacts with FtsN and FtsW.

The protein resides in the cell inner membrane. The catalysed reaction is Preferential cleavage: (Ac)2-L-Lys-D-Ala-|-D-Ala. Also transpeptidation of peptidyl-alanyl moieties that are N-acyl substituents of D-alanine.. It functions in the pathway cell wall biogenesis; peptidoglycan biosynthesis. Its function is as follows. Catalyzes cross-linking of the peptidoglycan cell wall at the division septum. The chain is Probable peptidoglycan D,D-transpeptidase FtsI (ftsI) from Caulobacter vibrioides (strain NA1000 / CB15N) (Caulobacter crescentus).